We begin with the raw amino-acid sequence, 274 residues long: Proteasome subunit beta (274 aa).

The propeptide at 1 to 52 (MPDPTGVAGRLPAVFMTPGTSSFTDFLSVAAPDLLPGARGPLPAPVTDAAHG) is removed in mature form; by autocatalysis. Thr-53 (nucleophile) is an active-site residue.

The protein belongs to the peptidase T1B family. In terms of assembly, the 20S proteasome core is composed of 14 alpha and 14 beta subunits that assemble into four stacked heptameric rings, resulting in a barrel-shaped structure. The two inner rings, each composed of seven catalytic beta subunits, are sandwiched by two outer rings, each composed of seven alpha subunits. The catalytic chamber with the active sites is on the inside of the barrel. Has a gated structure, the ends of the cylinder being occluded by the N-termini of the alpha-subunits. Is capped by the proteasome-associated ATPase, ARC.

The protein localises to the cytoplasm. It catalyses the reaction Cleavage of peptide bonds with very broad specificity.. The protein operates within protein degradation; proteasomal Pup-dependent pathway. Its activity is regulated as follows. The formation of the proteasomal ATPase ARC-20S proteasome complex, likely via the docking of the C-termini of ARC into the intersubunit pockets in the alpha-rings, may trigger opening of the gate for substrate entry. Interconversion between the open-gate and close-gate conformations leads to a dynamic regulation of the 20S proteasome proteolysis activity. In terms of biological role, component of the proteasome core, a large protease complex with broad specificity involved in protein degradation. This chain is Proteasome subunit beta, found in Parafrankia sp. (strain EAN1pec).